The primary structure comprises 235 residues: Phosphoribosylaminoimidazole-succinocarboxamide synthase (235 aa).

The protein belongs to the SAICAR synthetase family.

The catalysed reaction is 5-amino-1-(5-phospho-D-ribosyl)imidazole-4-carboxylate + L-aspartate + ATP = (2S)-2-[5-amino-1-(5-phospho-beta-D-ribosyl)imidazole-4-carboxamido]succinate + ADP + phosphate + 2 H(+). The protein operates within purine metabolism; IMP biosynthesis via de novo pathway; 5-amino-1-(5-phospho-D-ribosyl)imidazole-4-carboxamide from 5-amino-1-(5-phospho-D-ribosyl)imidazole-4-carboxylate: step 1/2. The protein is Phosphoribosylaminoimidazole-succinocarboxamide synthase (purC) of Streptococcus pneumoniae serotype 4 (strain ATCC BAA-334 / TIGR4).